A 904-amino-acid chain; its full sequence is Endoplasmic reticulum metallopeptidase 1 (904 aa).

An N-acetylmethionine modification is found at Met1. At 1-63 (MEWGSESAAV…PGGSGGASRG (63 aa)) the chain is on the cytoplasmic side. Positions 1 to 65 (MEWGSESAAV…GSGGASRGAG (65 aa)) are disordered. Residues 55 to 65 (GGSGGASRGAG) are compositionally biased toward gly residues. A helical membrane pass occupies residues 64–84 (AGTGLSEVRAALGLALYLIAL). The Lumenal segment spans residues 85 to 399 (RTLVQLSLQQ…AASKYRHGNM (315 aa)). N-linked (GlcNAc...) asparagine glycosylation occurs at Asn182. Residues Cys204 and Cys222 are joined by a disulfide bond. Zn(2+)-binding residues include His205 and Asp217. Glu251 acts as the Proton acceptor in catalysis. 3 residues coordinate Zn(2+): Glu252, Glu278, and His354. Residues 400–420 (VFFDVLGLFVIAYPSRIGSII) traverse the membrane as a helical segment. Residues 421–457 (NYMVVMGVVLYLGKKFLQPKHKTGNYKKDFLCGLGIT) are Cytoplasmic-facing. Residues 458-478 (LISWFTSLVTVLIIAVFISLI) traverse the membrane as a helical segment. Residues 479-489 (GQSLSWYNHFY) are Lumenal-facing. A helical transmembrane segment spans residues 490 to 510 (VSVCLYGTATVAKIILIHTLA). At 511–519 (KRFYYMNAS) the chain is on the cytoplasmic side. The chain crosses the membrane as a helical span at residues 520–540 (AQYLGEVFFDISLFVHCCFLV). Thr541 is a topological domain (lumenal). Residues 542–562 (LTYQGLCSAFISAVWVAFPLL) form a helical membrane-spanning segment. Residues 563–579 (TKLCVHKDFKQHGAQGK) lie on the Cytoplasmic side of the membrane. A helical transmembrane segment spans residues 580–600 (FIAFYLLGMFIPYLYALYLIW). Over 601 to 621 (AVFEMFTPILGRSGSEIPPDV) the chain is Lumenal. A helical membrane pass occupies residues 622–642 (VLASILAGCTMILSSYFINFI). At 643–651 (YLAKSTKKT) the chain is on the cytoplasmic side. Residues 652 to 672 (MLTLTLVCAITFLLVCSGTFF) traverse the membrane as a helical segment. The Lumenal portion of the chain corresponds to 673–904 (PYSSNPANPK…WVCTYDLFVF (232 aa)). Asn730 carries N-linked (GlcNAc...) asparagine glycosylation.

This sequence belongs to the peptidase M28 family. Zn(2+) is required as a cofactor.

Its subcellular location is the endoplasmic reticulum membrane. Functionally, within the ovary, required for the organization of somatic cells and oocytes into discrete follicular structures. In Homo sapiens (Human), this protein is Endoplasmic reticulum metallopeptidase 1.